Consider the following 1008-residue polypeptide: Ubiquitin carboxyl-terminal hydrolase 16 (1008 aa).

Residues 7 to 27 (LGISSLVLVVSLVLPLIGLFV) traverse the membrane as a helical segment. Zn(2+) contacts are provided by Cys74, Cys77, Cys85, Cys88, Cys94, Cys98, His107, and Cys111. The segment at 74-111 (CPVCYCLATTRCSRCKAVRYCSGKCQIIHWRQGHKDEC) adopts an MYND-type zinc-finger fold. Disordered regions lie at residues 122–149 (DESD…GPEP), 159–178 (LSNR…DNKD), 187–233 (VSVA…LDAH), 275–309 (SVHK…DPSL), and 326–379 (SDSC…YISD). The span at 193–203 (SGSSFSGFSSS) shows a compositional bias: low complexity. Over residues 222–233 (ESERSESLLDAH) the composition is skewed to basic and acidic residues. The span at 284-295 (GQNQSQSRSLHS) shows a compositional bias: polar residues. Residues 340-351 (SSLHFSFGSGSS) are compositionally biased toward low complexity. Residues 542–847 (CGLINVGNSC…GAYMLFYARC (306 aa)) form the USP domain. The active-site Nucleophile is Cys551. Catalysis depends on His807, which acts as the Proton acceptor. Disordered stretches follow at residues 859–905 (KTEA…GNIQ) and 952–1008 (FIFG…GGER). Low complexity-rich tracts occupy residues 878 to 888 (STISRSVSTSS) and 965 to 992 (SETP…RSSP).

The protein belongs to the peptidase C19 family. Interacts with SHM1 and SHM4. Interacts with HIPP27. In terms of tissue distribution, expressed in flowers, siliques, rosette leaves, cauline leaves, stems and at a lower level in roots. In roots, expressed in the sieve elements.

The protein resides in the membrane. It carries out the reaction Thiol-dependent hydrolysis of ester, thioester, amide, peptide and isopeptide bonds formed by the C-terminal Gly of ubiquitin (a 76-residue protein attached to proteins as an intracellular targeting signal).. In terms of biological role, recognizes and hydrolyzes the peptide bond at the C-terminal Gly of ubiquitin. Involved in the processing of poly-ubiquitin precursors as well as that of ubiquitinated proteins. Involved in salt tolerance by modulating sodium transport activity and repressing cell death at least partially through modulating SHM1 stability and activity. Involved in cadmium tolerance by interacting with HIPP27 and probably modulating its stability. This is Ubiquitin carboxyl-terminal hydrolase 16 (UBP16) from Arabidopsis thaliana (Mouse-ear cress).